We begin with the raw amino-acid sequence, 204 residues long: Large ribosomal subunit protein eL15 (204 aa).

The protein belongs to the eukaryotic ribosomal protein eL15 family. In terms of assembly, component of the large ribosomal subunit.

It is found in the cytoplasm. In terms of biological role, component of the large ribosomal subunit. The ribosome is a large ribonucleoprotein complex responsible for the synthesis of proteins in the cell. In Monopterus albus (Swamp eel), this protein is Large ribosomal subunit protein eL15 (rpl15).